An 835-amino-acid polypeptide reads, in one-letter code: Cap-specific mRNA (nucleoside-2'-O-)-methyltransferase 1 (835 aa).

The short motif at 2 to 19 is the Bipartite nuclear localization signal element; that stretch reads RRRNDPECTAPIKKQKKR. Residues 24–68 are disordered; sequence ALNLSAASGDEPPSSVNHAAKASTTSLSGSDSETEGKQHGSDSFD. Serine 28, serine 31, serine 53, serine 66, and serine 91 each carry phosphoserine. The segment covering 37-54 has biased composition (polar residues); sequence SSVNHAAKASTTSLSGSD. The span at 57-68 shows a compositional bias: basic and acidic residues; sequence TEGKQHGSDSFD. A G-patch domain is found at 87–133; sequence YNSVSQKLMAKMGFREGEGLGKYSQGRKDIVEASNQKGRRGLGLTLQ. The residue at position 108 (lysine 108) is an N6-acetyllysine. Substrate-binding positions include 203–207 and arginine 218; that span reads KSVFD. Residues 231–450 form the RrmJ-type SAM-dependent 2'-O-MTase domain; the sequence is FFLNRAAMKM…ERYVVCKGLK (220 aa). Asparagine 234 serves as a coordination point for S-adenosyl-L-methionine. Lysine 239 is a catalytic residue. S-adenosyl-L-methionine contacts are provided by residues 277–283 and 335–336; these read CAGPGGF and DI. Residue aspartate 364 is part of the active site. 374–376 is a binding site for substrate; sequence NLQ. The active-site Proton acceptor is the lysine 404. Asparagine 439 lines the substrate pocket. The segment at 727 to 835 is interaction with POLR2A; it reads SSGTPKLSYT…VLSFIQTHSA (109 aa). One can recognise a WW domain in the interval 752–786; the sequence is RTVNEPWTMGFSKSFKRKFFYNKKTKISTFDLPAD.

As to quaternary structure, interacts with POLR2A (via C-terminus).

The protein localises to the nucleus. It catalyses the reaction a 5'-end (N(7)-methyl 5'-triphosphoguanosine)-ribonucleoside in mRNA + S-adenosyl-L-methionine = a 5'-end (N(7)-methyl 5'-triphosphoguanosine)-(2'-O-methyl-ribonucleoside) in mRNA + S-adenosyl-L-homocysteine + H(+). S-adenosyl-L-methionine-dependent methyltransferase that mediates mRNA cap1 2'-O-ribose methylation to the 5'-cap structure of mRNAs. Methylates the ribose of the first nucleotide of a m(7)GpppG-capped mRNA and small nuclear RNA (snRNA) to produce m(7)GpppRm (cap1). Displays a preference for cap0 transcripts. Cap1 modification is linked to higher levels of translation. May be involved in the interferon response pathway. The chain is Cap-specific mRNA (nucleoside-2'-O-)-methyltransferase 1 (CMTR1) from Ailuropoda melanoleuca (Giant panda).